The following is a 102-amino-acid chain: Acylphosphatase 1 (102 aa).

One can recognise an Acylphosphatase-like domain in the interval 12–100 (TRLVRVRGRV…PRFDRFEQLP (89 aa)). Active-site residues include Arg-27 and Asn-45.

Belongs to the acylphosphatase family.

The catalysed reaction is an acyl phosphate + H2O = a carboxylate + phosphate + H(+). In Ralstonia nicotianae (strain ATCC BAA-1114 / GMI1000) (Ralstonia solanacearum), this protein is Acylphosphatase 1 (acyP1).